A 421-amino-acid chain; its full sequence is UDP-N-acetylglucosamine 1-carboxyvinyltransferase (421 aa).

22-23 (KN) provides a ligand contact to phosphoenolpyruvate. Arginine 93 is a binding site for UDP-N-acetyl-alpha-D-glucosamine. Cysteine 117 (proton donor) is an active-site residue. Cysteine 117 carries the post-translational modification 2-(S-cysteinyl)pyruvic acid O-phosphothioketal. UDP-N-acetyl-alpha-D-glucosamine-binding positions include 122 to 126 (RPVDQ), aspartate 309, and isoleucine 331.

It belongs to the EPSP synthase family. MurA subfamily.

It localises to the cytoplasm. The catalysed reaction is phosphoenolpyruvate + UDP-N-acetyl-alpha-D-glucosamine = UDP-N-acetyl-3-O-(1-carboxyvinyl)-alpha-D-glucosamine + phosphate. It functions in the pathway cell wall biogenesis; peptidoglycan biosynthesis. Cell wall formation. Adds enolpyruvyl to UDP-N-acetylglucosamine. The sequence is that of UDP-N-acetylglucosamine 1-carboxyvinyltransferase from Albidiferax ferrireducens (strain ATCC BAA-621 / DSM 15236 / T118) (Rhodoferax ferrireducens).